We begin with the raw amino-acid sequence, 570 residues long: Pleckstrin homology domain-containing family D member 1 (570 aa).

Positions 1–13 (MTTKTTPKELKAK) are enriched in basic and acidic residues. The segment at 1–42 (MTTKTTPKELKAKKESKKKGSAPEPPKNGPPRTSPPNTIEKK) is disordered. The segment covering 23–34 (PEPPKNGPPRTS) has biased composition (pro residues). One can recognise a PH domain in the interval 83–192 (GVQNYGILMK…WLKALRSATK (110 aa)). Positions 202-448 (ETMIRELENR…TGAQMTELQE (247 aa)) form a coiled coil. Over residues 542-551 (SKRGIRSSFR) the composition is skewed to basic residues. The interval 542-570 (SKRGIRSSFRKKTDSITTQPREKEPLMQL) is disordered. Positions 561 to 570 (PREKEPLMQL) are enriched in basic and acidic residues.

It belongs to the PLEKHD1 family.

This chain is Pleckstrin homology domain-containing family D member 1, found in Caenorhabditis elegans.